We begin with the raw amino-acid sequence, 762 residues long: ABC-type oligopeptide transporter ABCB9 (762 aa).

8 consecutive transmembrane segments (helical) span residues 7–27 (VVVTLAFVSTDVGVTTAIYAF), 47–67 (VLDLWAACLYRSCLLLGATIG), 84–104 (LVITLVCLFVGIYAMAKLLLF), 116–136 (FWALFVWTYISLAASFLLWGL), 181–201 (VAFLVAASFFLIVAALGETFL), 221–241 (FTTAVVVVCLLAIGSSLAAGI), 315–335 (VFMFSLSWQLSLVTFMGFPII), and 412–432 (SGLTLLVVQVSILYYGGHLVI). The ABC transmembrane type-1 domain occupies 184–467 (LVAASFFLIV…VGSVYSGLMQ (284 aa)). Residues 500-736 (VDFENVTFTY…GGLYAKLVQR (237 aa)) form the ABC transporter domain. Residue 535 to 542 (GPSGSGKS) participates in ATP binding.

Belongs to the ABC transporter superfamily. ABCB family. MHC peptide exporter (TC 3.A.1.209) subfamily. Homodimer. Interacts (via TMD0 region) with LAMP1; this interaction strongly stabilizes ABCB9 and protects ABCB9 against lysosomal degradation. Interacts (via TMD0 region) with LAMP2 (isoform LAMP-2B). Interacts (via TMD0) with YIF1B; this interaction allows (but is not essential) the ER-to-Golgi trafficking and strongly depends on a salt bridge within TMD0. As to expression, highly expressed in testis, particularly in the Sertoli cells of the seminiferous tubules, and at moderate levels in brain and spinal cord.

The protein localises to the lysosome membrane. The enzyme catalyses a [oligopeptide](in) + ATP + H2O = a [oligopeptide](out) + ADP + phosphate + H(+). Its function is as follows. ATP-dependent low-affinity peptide transporter which translocates a broad spectrum of peptides from the cytosol to the lysosomal lumen for degradation. Displays a broad peptide length specificity from 6-mer up to at least 59-mer peptides with an optimum of 23-mers. Binds and transports smaller and larger peptides with the same affinity. Favors positively charged, aromatic or hydrophobic residues in the N- and C-terminal positions whereas negatively charged residues as well as asparagine and methionine are not favored. This chain is ABC-type oligopeptide transporter ABCB9, found in Mus musculus (Mouse).